Consider the following 324-residue polypeptide: N-acetylmuramoyl-L-alanine amidase sle1 (324 aa).

The signal sequence occupies residues 1 to 25; the sequence is MQKKYITAIIGTTALSALASTHAQA. 3 LysM domains span residues 27 to 70, 84 to 127, and 147 to 190; these read TTHT…VLKV, TVYT…KLKV, and ATYT…KLKV. Positions 200-324 constitute a Peptidase C51 domain; sequence SNNTRSNGGY…YQVRNYKFIH (125 aa).

It localises to the secreted. The protein localises to the cell surface. It carries out the reaction Hydrolyzes the link between N-acetylmuramoyl residues and L-amino acid residues in certain cell-wall glycopeptides.. Functionally, peptidoglycan hydrolase involved in the splitting of the septum during cell division. This is N-acetylmuramoyl-L-alanine amidase sle1 (sle1) from Staphylococcus epidermidis (strain ATCC 12228 / FDA PCI 1200).